Here is a 290-residue protein sequence, read N- to C-terminus: 33 kDa chaperonin (290 aa).

Intrachain disulfides connect Cys234–Cys236 and Cys267–Cys270.

Belongs to the HSP33 family. In terms of processing, under oxidizing conditions two disulfide bonds are formed involving the reactive cysteines. Under reducing conditions zinc is bound to the reactive cysteines and the protein is inactive.

The protein resides in the cytoplasm. In terms of biological role, redox regulated molecular chaperone. Protects both thermally unfolding and oxidatively damaged proteins from irreversible aggregation. Plays an important role in the bacterial defense system toward oxidative stress. The polypeptide is 33 kDa chaperonin (Colwellia psychrerythraea (strain 34H / ATCC BAA-681) (Vibrio psychroerythus)).